The following is a 144-amino-acid chain: TSC22 domain family protein 1 (144 aa).

The leucine-zipper stretch occupies residues 77-98 (LKEQIKELIEKNSQLEQENNLL). A disordered region spans residues 109–144 (QFQAQLQTGSPPATTQPQGSTQPPAQPASQGSGPTA).

The protein belongs to the TSC-22/Dip/Bun family. In terms of assembly, forms homodimers. Forms a heterodimer with TSC22D4/THG1. Interacts with histone H1-2. Interacts with GNL3.

It localises to the cytoplasm. The protein localises to the nucleus. It is found in the mitochondrion. In terms of biological role, transcriptional repressor. Plays a role in the repression of hematopoietic precursor cell growth. Promotes IL2 deprivation-induced apoptosis in T-lymphocytes, via repression of TSC22D3/GILZ transcription and activation of the caspase cascade. Positively regulates cell death in response to TGFB3 during mammary gland involution. The sequence is that of TSC22 domain family protein 1 from Bathyergus suillus (Cape dune mole rat).